The chain runs to 203 residues: Probable nicotinate-nucleotide adenylyltransferase (203 aa).

It belongs to the NadD family.

It catalyses the reaction nicotinate beta-D-ribonucleotide + ATP + H(+) = deamido-NAD(+) + diphosphate. The protein operates within cofactor biosynthesis; NAD(+) biosynthesis; deamido-NAD(+) from nicotinate D-ribonucleotide: step 1/1. Catalyzes the reversible adenylation of nicotinate mononucleotide (NaMN) to nicotinic acid adenine dinucleotide (NaAD). The polypeptide is Probable nicotinate-nucleotide adenylyltransferase (Clostridium kluyveri (strain ATCC 8527 / DSM 555 / NBRC 12016 / NCIMB 10680 / K1)).